A 30-amino-acid chain; its full sequence is Ampulexin 3 (30 aa).

A signal peptide spans 1-17; the sequence is MKAIMVLFYVMTLTIIG.

In terms of assembly, monomer. Expressed in venom sac and, to a lesser extent, in venom gland. Not expressed in brain.

The protein resides in the secreted. This Ampulex compressa (Emerald cockroach wasp) protein is Ampulexin 3.